Reading from the N-terminus, the 1521-residue chain is uncharacterized protein (1521 aa).

Disordered regions lie at residues 1–20 (MENN…NSNN), 85–124 (TFQS…NNNN), 218–254 (ASSP…SSSS), 431–482 (VLNS…TGIT), and 735–797 (NNNN…HQQQ). Composition is skewed to low complexity over residues 94–108 (NTSS…QNNP), 219–254 (SSPS…SSSS), and 431–454 (VLNS…NNTS). The segment covering 455–464 (PAIVTSASIH) has biased composition (polar residues). 2 stretches are compositionally biased toward low complexity: residues 465–482 (NSNG…TGIT) and 735–762 (NNNN…NNIL). Residues 763-774 (SNTLTSSLINEP) are compositionally biased toward polar residues. Low complexity predominate over residues 775 to 788 (NQQHQHQQHQQQNQ). The stretch at 853 to 903 (IVNSQQQQQQQQQQQQQQQQQQQQQQQQQQQQQQQQQQQQQQHNNTQNINN) forms a coiled coil. The span at 1398–1453 (QQPLPTSKTSSSSSSTSSEATPYLSSSVPPSIVTSTPSTTPMISSSNPNTSSLPTS) shows a compositional bias: low complexity. A disordered region spans residues 1398 to 1455 (QQPLPTSKTSSSSSSTSSEATPYLSSSVPPSIVTSTPSTTPMISSSNPNTSSLPTSER).

This is an uncharacterized protein from Dictyostelium discoideum (Social amoeba).